A 301-amino-acid chain; its full sequence is Growth-regulating factor 2 (301 aa).

In terms of domain architecture, QLQ spans Leu-11–His-46. Short sequence motifs (bipartite nuclear localization signal) lie at residues Arg-83–Arg-102 and Arg-120–Lys-127. The WRC domain maps to Asp-87–Met-131.

The protein belongs to the GRF family.

It is found in the nucleus. Functionally, transcription activator that plays a regulatory role in gibberellin-induced stem elongation. This chain is Growth-regulating factor 2 (GRF2), found in Oryza sativa subsp. japonica (Rice).